We begin with the raw amino-acid sequence, 781 residues long: ATP-dependent RNA helicase rok1 (781 aa).

Disordered regions lie at residues 7–108 (LSRG…KPKL) and 134–177 (QDEA…IYPQ). The span at 48–57 (KRGKKRKRKG) shows a compositional bias: basic residues. The span at 66–75 (SGDEDDDASD) shows a compositional bias: acidic residues. 2 stretches are compositionally biased toward basic and acidic residues: residues 84–108 (TPEELAAKKDAELKADEPKKQKPKL) and 139–173 (TEEKPPKKQKKQKEDRKKQEEEEKKKKKKDEDKKQ). Residues 184–212 (ELKYTYGIHPVLADNITRQGFRVPTEVQM) carry the Q motif motif. The 255-residue stretch at 233 to 487 (DVKVEKGIDF…TKHIDKRAKR (255 aa)) folds into the Helicase ATP-binding domain. Residue 246–253 (APTGSGKT) coordinates ATP. The tract at residues 323–386 (ESNEQEETEQ…SRAKGDQKFK (64 aa)) is disordered. Positions 339 to 369 (QDSDSDSEAESEPEEVMKIDEEEEEEEESDS) are enriched in acidic residues. The span at 370–386 (DAEKKTESRAKGDQKFK) shows a compositional bias: basic and acidic residues. The DEAD box signature appears at 434–437 (DEAD). Positions 527 to 689 (ALRQLLHPVS…GKDIDEKDTV (163 aa)) constitute a Helicase C-terminal domain. Residues 718 to 781 (RGVESRRTGG…KAEEEWTGLD (64 aa)) are disordered. The segment covering 736 to 752 (SWERRRENNRREAIEAS) has biased composition (basic and acidic residues).

The protein belongs to the DEAD box helicase family. DDX52/ROK1 subfamily. As to quaternary structure, interacts with the U3 snoRNA and is associated with the 90S and 40S pre-ribosomes.

The protein localises to the nucleus. It is found in the nucleolus. It carries out the reaction ATP + H2O = ADP + phosphate + H(+). Functionally, ATP-dependent RNA helicase involved in 40S ribosomal subunit biogenesis. Required for the processing and cleavage of 35S pre-rRNA at sites A0, A1, and A2, leading to mature 18S rRNA. This chain is ATP-dependent RNA helicase rok1 (drh-16), found in Neurospora crassa (strain ATCC 24698 / 74-OR23-1A / CBS 708.71 / DSM 1257 / FGSC 987).